The following is a 166-amino-acid chain: Large ribosomal subunit protein uL10 (166 aa).

Belongs to the universal ribosomal protein uL10 family. Part of the ribosomal stalk of the 50S ribosomal subunit. The N-terminus interacts with L11 and the large rRNA to form the base of the stalk. The C-terminus forms an elongated spine to which L12 dimers bind in a sequential fashion forming a multimeric L10(L12)X complex.

Its function is as follows. Forms part of the ribosomal stalk, playing a central role in the interaction of the ribosome with GTP-bound translation factors. The chain is Large ribosomal subunit protein uL10 from Aeromonas salmonicida (strain A449).